The chain runs to 404 residues: Glucose-1-phosphate adenylyltransferase (404 aa).

Alpha-D-glucose 1-phosphate is bound by residues Tyr-99, Gly-164, 179-180 (EK), and Ser-197.

The protein belongs to the bacterial/plant glucose-1-phosphate adenylyltransferase family. As to quaternary structure, homotetramer.

The catalysed reaction is alpha-D-glucose 1-phosphate + ATP + H(+) = ADP-alpha-D-glucose + diphosphate. Its pathway is glycan biosynthesis; glycogen biosynthesis. In terms of biological role, involved in the biosynthesis of ADP-glucose, a building block required for the elongation reactions to produce glycogen. Catalyzes the reaction between ATP and alpha-D-glucose 1-phosphate (G1P) to produce pyrophosphate and ADP-Glc. The polypeptide is Glucose-1-phosphate adenylyltransferase (Rhodococcus erythropolis (strain PR4 / NBRC 100887)).